We begin with the raw amino-acid sequence, 153 residues long: Ribosome maturation factor RimP (153 aa).

It belongs to the RimP family.

The protein localises to the cytoplasm. Functionally, required for maturation of 30S ribosomal subunits. In Solibacter usitatus (strain Ellin6076), this protein is Ribosome maturation factor RimP.